The chain runs to 439 residues: Glycosyl hydrolase DigH (439 aa).

The N-terminal stretch at 1-27 (MDICSRNKKLTIRRPAILVALALLLCS) is a signal peptide. The N-palmitoyl cysteine moiety is linked to residue cysteine 28. Cysteine 28 carries the S-diacylglycerol cysteine lipid modification. A disordered region spans residues 34–54 (ESMVTPPAGSKPPATTQQSSQ).

This sequence belongs to the glycosyl hydrolase-like 10 (GHL10) family.

It localises to the cell outer membrane. In terms of biological role, divisome-localized glycosyl hydrolase that cleaves peptide-free (denuded) peptidoglycans. This chain is Glycosyl hydrolase DigH, found in Escherichia coli O157:H7.